Reading from the N-terminus, the 227-residue chain is Phosphoglycolate phosphatase (227 aa).

D9 acts as the Nucleophile in catalysis. Positions 9, 11, and 171 each coordinate Mg(2+).

The protein belongs to the HAD-like hydrolase superfamily. CbbY/CbbZ/Gph/YieH family. The cofactor is Mg(2+).

It catalyses the reaction 2-phosphoglycolate + H2O = glycolate + phosphate. Its pathway is organic acid metabolism; glycolate biosynthesis; glycolate from 2-phosphoglycolate: step 1/1. Its function is as follows. Specifically catalyzes the dephosphorylation of 2-phosphoglycolate. Is involved in the dissimilation of the intracellular 2-phosphoglycolate formed during the DNA repair of 3'-phosphoglycolate ends, a major class of DNA lesions induced by oxidative stress. This chain is Phosphoglycolate phosphatase, found in Mesorhizobium japonicum (strain LMG 29417 / CECT 9101 / MAFF 303099) (Mesorhizobium loti (strain MAFF 303099)).